We begin with the raw amino-acid sequence, 382 residues long: Galactokinase (382 aa).

Substrate is bound at residue 34–37 (EHTD). 124-130 (GAGLSSS) contributes to the ATP binding site. 2 residues coordinate Mg(2+): Ser130 and Glu162. Asp174 acts as the Proton acceptor in catalysis. Tyr223 lines the substrate pocket.

Belongs to the GHMP kinase family. GalK subfamily.

It is found in the cytoplasm. The enzyme catalyses alpha-D-galactose + ATP = alpha-D-galactose 1-phosphate + ADP + H(+). It functions in the pathway carbohydrate metabolism; galactose metabolism. Functionally, catalyzes the transfer of the gamma-phosphate of ATP to D-galactose to form alpha-D-galactose-1-phosphate (Gal-1-P). This is Galactokinase from Shigella dysenteriae serotype 1 (strain Sd197).